Here is a 120-residue protein sequence, read N- to C-terminus: 5-hydroxyisourate hydrolase 2 (120 aa).

Substrate is bound by residues H10, R48, and Y117.

Belongs to the transthyretin family. 5-hydroxyisourate hydrolase subfamily. In terms of assembly, homotetramer.

It carries out the reaction 5-hydroxyisourate + H2O = 5-hydroxy-2-oxo-4-ureido-2,5-dihydro-1H-imidazole-5-carboxylate + H(+). Its function is as follows. Catalyzes the hydrolysis of 5-hydroxyisourate (HIU) to 2-oxo-4-hydroxy-4-carboxy-5-ureidoimidazoline (OHCU). In Rhizobium meliloti (strain 1021) (Ensifer meliloti), this protein is 5-hydroxyisourate hydrolase 2.